Consider the following 78-residue polypeptide: Beta-defensin 105A (78 aa).

A signal peptide spans 1–27 (MALIRKTFYFLFAVFFILVQLPSGCQA). Cystine bridges form between Cys43/Cys74, Cys53/Cys67, and Cys57/Cys73.

This sequence belongs to the beta-defensin family.

It is found in the secreted. Its function is as follows. Has antimicrobial activity. The chain is Beta-defensin 105A (DEFB105A) from Gorilla gorilla gorilla (Western lowland gorilla).